Here is a 269-residue protein sequence, read N- to C-terminus: Intercellular adhesion molecule 4 (269 aa).

An N-terminal signal peptide occupies residues 1-20 (SLFPLSLLFFLAAAYPGVGS). The Extracellular segment spans residues 21-238 (ALGRRTKRAQ…MLAWSSAPTA (218 aa)). Ig-like C2-type domains are found at residues 60-122 (GKSV…TRWA) and 144-215 (GRKY…LNLD). Asn66, Asn76, Asn188, and Asn221 each carry an N-linked (GlcNAc...) asparagine glycan. 4 cysteine pairs are disulfide-bonded: Cys67/Cys111, Cys67/Cys115, Cys71/Cys115, and Cys151/Cys208. The chain crosses the membrane as a helical span at residues 239–259 (LASVSIAALVGILLTVGAAYL). Residues 260–269 (CKCLAMKSQA) lie on the Cytoplasmic side of the membrane.

Belongs to the immunoglobulin superfamily. ICAM family. N- and O-glycosylated.

The protein localises to the cell membrane. Its function is as follows. ICAM proteins are ligands for the leukocyte adhesion protein LFA-1 (integrin alpha-L/beta-2). ICAM4 is also a ligand for alpha-4/beta-1 and alpha-V integrins. The protein is Intercellular adhesion molecule 4 (ICAM4) of Pan troglodytes (Chimpanzee).